Here is a 156-residue protein sequence, read N- to C-terminus: Glutaredoxin-2, mitochondrial (156 aa).

Residues 1 to 19 (MSWRRAASVGRRLVASGRI) constitute a mitochondrion transit peptide. The Glutaredoxin domain maps to 50-150 (VNQIQETISN…PLVHQCYLKK (101 aa)). Residue cysteine 61 participates in [2Fe-2S] cluster binding. Glutathione is bound at residue lysine 67. At cysteine 70 the chain carries S-glutathionyl cysteine; alternate. A disulfide bridge links cysteine 70 with cysteine 73. Glutathione-binding residues include glutamine 102 and valine 114. Cysteine 146 lines the [2Fe-2S] cluster pocket.

It belongs to the glutaredoxin family. Monomer; active form. Homodimer; inactive form. The homodimer is probably linked by 1 2Fe-2S cluster. As to expression, widely expressed. Highly expressed in testis, and at much lower level in kidney and brain.

Its subcellular location is the mitochondrion. The protein localises to the nucleus. Its activity is regulated as follows. The 2Fe-2S present in the homodimer leads to inactivation of the enzyme. The 2Fe-2S may serve as a redox sensor: the presence of one-electron oxidants or reductants leading to the loss of the 2Fe-2S cluster, subsequent monomerization and activation of the enzyme. Functionally, glutathione-dependent oxidoreductase that facilitates the maintenance of mitochondrial redox homeostasis upon induction of apoptosis by oxidative stress. Involved in response to hydrogen peroxide and regulation of apoptosis caused by oxidative stress. Acts as a very efficient catalyst of monothiol reactions because of its high affinity for protein glutathione-mixed disulfides. Can receive electrons not only from glutathione (GSH), but also from thioredoxin reductase supporting both monothiol and dithiol reactions. Efficiently catalyzes both glutathionylation and deglutathionylation of mitochondrial complex I, which in turn regulates the superoxide production by the complex. Overexpression decreases the susceptibility to apoptosis and prevents loss of cardiolipin and cytochrome c release. This Mus musculus (Mouse) protein is Glutaredoxin-2, mitochondrial (Glrx2).